Consider the following 344-residue polypeptide: S-adenosylmethionine:tRNA ribosyltransferase-isomerase (344 aa).

Belongs to the QueA family. In terms of assembly, monomer.

It localises to the cytoplasm. The catalysed reaction is 7-aminomethyl-7-carbaguanosine(34) in tRNA + S-adenosyl-L-methionine = epoxyqueuosine(34) in tRNA + adenine + L-methionine + 2 H(+). Its pathway is tRNA modification; tRNA-queuosine biosynthesis. Functionally, transfers and isomerizes the ribose moiety from AdoMet to the 7-aminomethyl group of 7-deazaguanine (preQ1-tRNA) to give epoxyqueuosine (oQ-tRNA). The chain is S-adenosylmethionine:tRNA ribosyltransferase-isomerase from Lactiplantibacillus plantarum (strain ATCC BAA-793 / NCIMB 8826 / WCFS1) (Lactobacillus plantarum).